A 547-amino-acid chain; its full sequence is GMP synthase [glutamine-hydrolyzing] (547 aa).

Positions 12 to 210 constitute a Glutamine amidotransferase type-1 domain; that stretch reads KILILDFGSQ…VLDIAGAKPD (199 aa). Residue cysteine 89 is the Nucleophile of the active site. Active-site residues include histidine 184 and glutamate 186. The 193-residue stretch at 211-403 folds into the GMPS ATP-PPase domain; the sequence is WIMRDHIEEA…LGLPAEMVYR (193 aa). 238–244 is an ATP binding site; the sequence is SGGVDSS.

As to quaternary structure, homodimer.

The enzyme catalyses XMP + L-glutamine + ATP + H2O = GMP + L-glutamate + AMP + diphosphate + 2 H(+). Its pathway is purine metabolism; GMP biosynthesis; GMP from XMP (L-Gln route): step 1/1. Functionally, catalyzes the synthesis of GMP from XMP. This is GMP synthase [glutamine-hydrolyzing] from Burkholderia pseudomallei (strain 1710b).